A 154-amino-acid polypeptide reads, in one-letter code: D-ribose pyranase 2 (154 aa).

The Proton donor role is filled by His20. Substrate is bound by residues Asp28, His98, and 121-123; that span reads WGN.

The protein belongs to the RbsD / FucU family. RbsD subfamily. In terms of assembly, homodecamer.

It localises to the cytoplasm. It catalyses the reaction beta-D-ribopyranose = beta-D-ribofuranose. It participates in carbohydrate metabolism; D-ribose degradation; D-ribose 5-phosphate from beta-D-ribopyranose: step 1/2. Catalyzes the interconversion of beta-pyran and beta-furan forms of D-ribose. This is D-ribose pyranase 2 from Rubrobacter xylanophilus (strain DSM 9941 / JCM 11954 / NBRC 16129 / PRD-1).